A 374-amino-acid chain; its full sequence is Deoxyguanosinetriphosphate triphosphohydrolase-like protein (374 aa).

Positions 65–196 constitute an HD domain; that stretch reads RLTHSLEVAQ…ANLADEIAYN (132 aa).

This sequence belongs to the dGTPase family. Type 2 subfamily.

The polypeptide is Deoxyguanosinetriphosphate triphosphohydrolase-like protein (dgt) (Nitrosomonas europaea (strain ATCC 19718 / CIP 103999 / KCTC 2705 / NBRC 14298)).